The chain runs to 319 residues: Taste receptor type 2 member 7 (319 aa).

The Extracellular portion of the chain corresponds to 1–9 (MADKVQTTL). A helical membrane pass occupies residues 10–30 (LFLAVGEFSVGILGNAFIGLV). Topologically, residues 31–55 (NCMDWVKKRKIASIDLILTSLAISR) are cytoplasmic. Residues 56-76 (ICLLCVILLDCFILVLYPDVY) form a helical membrane-spanning segment. Topologically, residues 77 to 94 (ATGKEMRIIDFFWTLTNH) are extracellular. The chain crosses the membrane as a helical span at residues 95–115 (LSIWFATCLSIYYXFRIANFF). Residues 116 to 128 (HPLFLWMKWRIDR) lie on the Cytoplasmic side of the membrane. The chain crosses the membrane as a helical span at residues 129–149 (VISWILLGCVVLSVFISLPAT). Over 150–187 (ENLNADFRFCVKAKRKTNLTWSCRVNKTQHASTKLFLN) the chain is Extracellular. Residues Asn-167 and Asn-175 are each glycosylated (N-linked (GlcNAc...) asparagine). Residues 188–208 (LATLLPFCVCLMSFFLLILSL) traverse the membrane as a helical segment. The Cytoplasmic portion of the chain corresponds to 209-235 (RRHIRRMQLSATGCRDPSTEAHVRALK). Residues 236–256 (AVISFLLLFIAYYLSFLVATS) form a helical membrane-spanning segment. The Extracellular portion of the chain corresponds to 257–266 (SYFMPETELA). Residues 267–287 (VIFGESIALIYPSSHSFILIL) traverse the membrane as a helical segment. Residues 288 to 319 (GNNKLRHASLKVIWKVMSILKGRKFQQHKQIG) are Cytoplasmic-facing.

It belongs to the G-protein coupled receptor T2R family.

It is found in the membrane. Its function is as follows. Gustducin-coupled receptor implicated in the perception of bitter compounds in the oral cavity and the gastrointestinal tract. Signals through PLCB2 and the calcium-regulated cation channel TRPM5. This is Taste receptor type 2 member 7 (TAS2R7) from Pan troglodytes (Chimpanzee).